Here is a 341-residue protein sequence, read N- to C-terminus: Transmembrane protein 120A-A (341 aa).

At 1-131 (MLFNPTGLTE…KQSKFAYKDE (131 aa)) the chain is on the cytoplasmic side. Position 129 (lysine 129) interacts with CoA. Residues 132-151 (YEKFKLYLTVLLLFFSFTCR) form a helical membrane-spanning segment. Over 152-157 (FLVSYR) the chain is Extracellular. A helical transmembrane segment spans residues 158-176 (VVDALFNFLLVWYYCTLTI). The Cytoplasmic portion of the chain corresponds to 177 to 189 (RESILINNGSKIK). CoA contacts are provided by serine 186 and lysine 187. The helical transmembrane segment at 190–208 (GWWVFQHYVSTFLSGVMLT) threads the bilayer. The Extracellular segment spans residues 209 to 217 (WPDGELYQM). Residues 218–239 (FRNQFLSYSMYINFVQFFQYYY) traverse the membrane as a helical segment. 4 residues coordinate CoA: glutamine 236, tyrosine 239, glutamine 240, and histidine 282. Topologically, residues 240–269 (QSGCLYRLRALGERHNMDLTVEGFQSWMWR) are cytoplasmic. A helical membrane pass occupies residues 270 to 293 (GLTFLLPFLFLGHFFQLYNGITLF). Topologically, residues 294–303 (QMTQLPEWKE) are extracellular. The chain crosses the membrane as a helical span at residues 304–329 (WQVLMCGSTFLVLFMGNFFTTLGVVY). The Cytoplasmic segment spans residues 330–341 (HKYMDQDKAKGL). Lysine 331 is a binding site for CoA.

It belongs to the TMEM120 family. As to quaternary structure, homodimer.

It localises to the cell membrane. The protein resides in the nucleus inner membrane. Its subcellular location is the endoplasmic reticulum. Functionally, multifunctional protein involved in mechanosensation, and plays an essential role in lipid metabolism. May function as a potential ion channel involved in sensing mechanical stimuli. TMEM120A is structurally similar to a lipid-modifying enzyme, ELOVL7, and contains a bound coenzyme A molecule, which suggests it might function as an enzyme in lipid metabolism. The protein is Transmembrane protein 120A-A (tmem120aa) of Danio rerio (Zebrafish).